A 2038-amino-acid polypeptide reads, in one-letter code: Non-reducing polyketide synthase ZEA1 (2038 aa).

Residues 9–246 are N-terminal acylcarrier protein transacylase domain (SAT); that stretch reads LLFGDQTDSW…NELNIHALQH (238 aa). The Ketosynthase family 3 (KS3) domain maps to 364–794; it reads PGRIAIVGMA…GGNACILLED (431 aa). Active-site for beta-ketoacyl synthase activity residues include Cys537, His672, and His711. The malonyl-CoA:ACP transacylase (MAT) domain stretch occupies residues 888–1172; the sequence is VFVFTGQGSH…VCSSFVRATL (285 aa). Catalysis depends on Ser979, which acts as the For acyl/malonyl transferase activity. The interval 1221 to 1572 is product template (PT) domain; sequence SLLNLPTYAW…HFHEVENAVL (352 aa). Residues 1254–1405 form an N-terminal hotdog fold region; sequence HETFKANIST…GQLIQARWDK (152 aa). Residues 1254–1573 enclose the PKS/mFAS DH domain; that stretch reads HETFKANIST…FHEVENAVLD (320 aa). A C-terminal hotdog fold region spans residues 1425–1573; it reads ISHRLQPQIL…FHEVENAVLD (149 aa). The Carrier domain occupies 1616–1693; the sequence is QSDAHVLDSI…DLRRVFAPKS (78 aa). O-(pantetheine 4'-phosphoryl)serine is present on Ser1653. The disordered stretch occupies residues 1700–1738; it reads NDLSRPSLVDDTSQALQSSGSESFDQPPTSVTSTSDSGS. The segment covering 1709 to 1737 has biased composition (polar residues); sequence DDTSQALQSSGSESFDQPPTSVTSTSDSG. The segment at 1778 to 1882 is thioesterase (TE) domain; sequence TGTIATYIHL…PRSKTVEDKN (105 aa). His2021 (for thioesterase activity) is an active-site residue.

The protein operates within mycotoxin biosynthesis. Non-reducing polyketide synthase; part of the gene cluster that mediates the biosynthesis of zearalenone (ZEA), a nonsteroid estrogen that is a contaminant of cereal grains and causes estrogenic disorders in humans and animals. The ZEA backbone is synthesized from a single acetyl-CoA molecule and eight malonyl-CoA molecules. The reducing polyketide synthase ZEA2 is proposed to synthesize a reduced hexaketide intermediate by using different combinations of its reductive domains during each round of condensation. The hexaketide thioester is then transacylated to the non-reducing polyketide synthase ZEA1 and is further condensed with three malonyl-CoAs without reductive tailoring to yield a mixed reduced/unreduced nonaketide. ZEA1 must be able to interact with ZEA2 to facilitate starter-unit acyltransfer and initiate polyketide biosynthesis. ZEA1 also mediates the required C2-C7 cyclization to form the resorcylate core and catalyzes the formation of the macrolactone. ZEA1 exhibits broad starter-unit specificities toward fatty acyl-CoAs ranging in sizes between C6 and C16 and displays the highest activity toward decanoyl-CoA. ZEB1 is then responsible for the chemical conversion of beta-zearalenonol (beta-ZOL) to ZEA in the biosynthetic pathway. The protein is Non-reducing polyketide synthase ZEA1 of Gibberella zeae (strain ATCC MYA-4620 / CBS 123657 / FGSC 9075 / NRRL 31084 / PH-1) (Wheat head blight fungus).